The following is a 131-amino-acid chain: Holin-like protein CidA (131 aa).

The next 4 helical transmembrane spans lie at 4-24 (VQLI…TYIG), 30-50 (IFHL…LLLQ), 65-85 (FLLK…MDVA), and 88-108 (ITLN…IVAL).

Belongs to the CidA/LrgA family. CidA subfamily.

Its subcellular location is the cell membrane. Functionally, increases the activity of extracellular murein hydrolases possibly by mediating their export via hole formation. Inhibited by the antiholin-like proteins LrgAB. In an unstressed cell, the LrgAB products probably inhibit the function of the CidAB proteins. When a cell is stressed by the addition of antibiotics or by other factors in the environment, the CidAB proteins possibly oligomerize within the bacterial cell membrane, creating lesions that disrupt the proton motive force, which in turn results in loss of cell viability. These lesions are also hypothesized to regulate the subsequent cell lysis by either allowing the murein hydrolases access to the cell wall substrate and/or regulating their activity by a possible change in the cell wall pH that results from loss of membrane potential. This is Holin-like protein CidA from Staphylococcus aureus (strain Mu3 / ATCC 700698).